Reading from the N-terminus, the 248-residue chain is Ubiquinone biosynthesis O-methyltransferase (248 aa).

Arginine 41, glycine 72, aspartate 93, and methionine 136 together coordinate S-adenosyl-L-methionine.

It belongs to the methyltransferase superfamily. UbiG/COQ3 family.

It catalyses the reaction a 3-demethylubiquinol + S-adenosyl-L-methionine = a ubiquinol + S-adenosyl-L-homocysteine + H(+). The enzyme catalyses a 3-(all-trans-polyprenyl)benzene-1,2-diol + S-adenosyl-L-methionine = a 2-methoxy-6-(all-trans-polyprenyl)phenol + S-adenosyl-L-homocysteine + H(+). It functions in the pathway cofactor biosynthesis; ubiquinone biosynthesis. In terms of biological role, O-methyltransferase that catalyzes the 2 O-methylation steps in the ubiquinone biosynthetic pathway. In Bartonella bacilliformis (strain ATCC 35685 / KC583 / Herrer 020/F12,63), this protein is Ubiquinone biosynthesis O-methyltransferase.